An 88-amino-acid polypeptide reads, in one-letter code: Elongation factor 1-beta (88 aa).

The protein belongs to the EF-1-beta/EF-1-delta family.

In terms of biological role, promotes the exchange of GDP for GTP in EF-1-alpha/GDP, thus allowing the regeneration of EF-1-alpha/GTP that could then be used to form the ternary complex EF-1-alpha/GTP/AAtRNA. In Halobacterium salinarum (strain ATCC 29341 / DSM 671 / R1), this protein is Elongation factor 1-beta.